Reading from the N-terminus, the 591-residue chain is Aspartate--tRNA(Asp/Asn) ligase (591 aa).

An L-aspartate-binding site is contributed by Glu-175. The aspartate stretch occupies residues 199–202 (QQFK). 2 residues coordinate L-aspartate: Arg-221 and His-453. 221–223 (RDE) provides a ligand contact to ATP. Glu-486 lines the ATP pocket. Arg-493 is an L-aspartate binding site. 538-541 (GIDR) contacts ATP.

This sequence belongs to the class-II aminoacyl-tRNA synthetase family. Type 1 subfamily. In terms of assembly, homodimer.

It is found in the cytoplasm. The catalysed reaction is tRNA(Asx) + L-aspartate + ATP = L-aspartyl-tRNA(Asx) + AMP + diphosphate. Functionally, aspartyl-tRNA synthetase with relaxed tRNA specificity since it is able to aspartylate not only its cognate tRNA(Asp) but also tRNA(Asn). Reaction proceeds in two steps: L-aspartate is first activated by ATP to form Asp-AMP and then transferred to the acceptor end of tRNA(Asp/Asn). The polypeptide is Aspartate--tRNA(Asp/Asn) ligase (Jannaschia sp. (strain CCS1)).